A 140-amino-acid chain; its full sequence is MAGFISNFFGVGDSDSQYEEPTEASQAAAPTESATNTRSTPKVVPMQGGKSVNSKIALFEPKIYSDVKEIATQLLKNQAVIINFDHVDDEMARRIVDFLTGTVFAINGEIERIGDEIFLCIPENYEVSGSTTSQFDTSKL.

The interval 15-47 (DSQYEEPTEASQAAAPTESATNTRSTPKVVPMQ) is disordered.

Belongs to the SepF family. In terms of assembly, homodimer. Interacts with FtsZ.

The protein localises to the cytoplasm. Its function is as follows. Cell division protein that is part of the divisome complex and is recruited early to the Z-ring. Probably stimulates Z-ring formation, perhaps through the cross-linking of FtsZ protofilaments. Its function overlaps with FtsA. This chain is Cell division protein SepF, found in Lactiplantibacillus plantarum (strain ATCC BAA-793 / NCIMB 8826 / WCFS1) (Lactobacillus plantarum).